The following is an 83-amino-acid chain: Mitochondrial import inner membrane translocase subunit Tim8 (83 aa).

The short motif at 35–60 is the Twin CX3C motif element; sequence CWDVCFADYRPPSKMDGKTQTCIQNC. 2 disulfides stabilise this stretch: C35/C60 and C39/C56.

It belongs to the small Tim family. In terms of assembly, heterohexamer; composed of 3 copies of ddp-1/tim-8 and 3 copies of tin-13/tim-13, named soluble 70 kDa complex. Associates with the TIM22 complex, whose core is composed of tim-22.

Its subcellular location is the mitochondrion inner membrane. Its function is as follows. Mitochondrial intermembrane chaperone that participates in the import and insertion of some multi-pass transmembrane proteins into the mitochondrial inner membrane. Also required for the transfer of beta-barrel precursors from the TOM complex to the sorting and assembly machinery (SAM complex) of the outer membrane. Acts as a chaperone-like protein that protects the hydrophobic precursors from aggregation and guide them through the mitochondrial intermembrane space. The ddp-1/tim-8-tim-13 complex mediates the import of some proteins while the predominant tim-9/tin-9.1-tim-10/tin-10 70 kDa complex mediates the import of much more proteins. This chain is Mitochondrial import inner membrane translocase subunit Tim8, found in Caenorhabditis elegans.